Reading from the N-terminus, the 230-residue chain is Maleylacetoacetate isomerase (230 aa).

Residues 7 to 95 enclose the GST N-terminal domain; the sequence is LRVTLYTYFR…YLDEAFPDNP (89 aa). Glutathione contacts are provided by residues 17-22, Q46, V60, 79-80, Q123, and 127-129; these read SSCSAR, QS, and NLR. One can recognise a GST C-terminal domain in the interval 104-226; sequence NPQQRALVRS…HWRTQQDTPT (123 aa).

The protein belongs to the GST superfamily. Zeta family. The cofactor is glutathione.

The protein resides in the cytoplasm. The enzyme catalyses 4-maleylacetoacetate = 4-fumarylacetoacetate. Its pathway is amino-acid degradation; L-phenylalanine degradation; acetoacetate and fumarate from L-phenylalanine: step 5/6. This Emericella nidulans (strain FGSC A4 / ATCC 38163 / CBS 112.46 / NRRL 194 / M139) (Aspergillus nidulans) protein is Maleylacetoacetate isomerase (maiA).